A 339-amino-acid polypeptide reads, in one-letter code: Purple acid phosphatase 4 (339 aa).

A signal peptide spans 1 to 31; that stretch reads MSSKFDIGSLSIVMTLLICFLLLSLAPKLEA. D53 contacts Fe cation. N61 is a glycosylation site (N-linked (GlcNAc...) asparagine). Fe cation-binding residues include D86 and Y89. D86 is a binding site for Zn(2+). N124 and H218 together coordinate Zn(2+). The active-site Proton donor is the H227. Residue H253 coordinates Zn(2+). Residue 253-255 participates in substrate binding; that stretch reads HDH. H255 is a Fe cation binding site. Residue N284 is glycosylated (N-linked (GlcNAc...) asparagine).

This sequence belongs to the metallophosphoesterase superfamily. Purple acid phosphatase family. Homodimer. It depends on Fe cation as a cofactor. The cofactor is Zn(2+). In terms of tissue distribution, expressed in roots, stems, leaves, flowers and siliques.

Its subcellular location is the secreted. It catalyses the reaction a phosphate monoester + H2O = an alcohol + phosphate. In Arabidopsis thaliana (Mouse-ear cress), this protein is Purple acid phosphatase 4 (PAP4).